The primary structure comprises 244 residues: Protein TIFY 10b (244 aa).

One can recognise a Tify domain in the interval 97–132; the sequence is QEPEKRQLTIFYGGKVLVFNDFPADKAKGLMQLASK. Residues 185-210 carry the Jas motif; that stretch reads PIARKASLHRFLEKRKDRLNAKTPYQ. The Nuclear localization signal signature appears at 187-194; it reads ARKASLHR. The interval 193–244 is disordered; that stretch reads HRFLEKRKDRLNAKTPYQASPSDATPVKKEPESQPWLGLGPNAVVKPIERGQ. Basic and acidic residues predominate over residues 194–204; that stretch reads RFLEKRKDRLN.

Belongs to the TIFY/JAZ family. Post-translationally, ubiquitinated. Targeted for degradation by the SCF(COI1) E3 ubiquitin ligase-proteasome pathway during jasmonate signaling.

It localises to the nucleus. Repressor of jasmonate responses. This is Protein TIFY 10b from Oryza sativa subsp. indica (Rice).